Here is a 146-residue protein sequence, read N- to C-terminus: MMDINEIREYLPHRYPFLLVDRVVELDIEGKRIRAYKNVSINEPFFNGHFPEHPIMPGVLIIEAMAQAAGILGFKMLDVKPADGTLYYFVGSDKLRFRQPVLPGDQLQLHAKFISVKRSIWKFDCHATVDDKPVCSAEIICAERKL.

Histidine 49 is an active-site residue.

Belongs to the thioester dehydratase family. FabZ subfamily.

It localises to the cytoplasm. The enzyme catalyses a (3R)-hydroxyacyl-[ACP] = a (2E)-enoyl-[ACP] + H2O. Functionally, involved in unsaturated fatty acids biosynthesis. Catalyzes the dehydration of short chain beta-hydroxyacyl-ACPs and long chain saturated and unsaturated beta-hydroxyacyl-ACPs. This Pseudomonas aeruginosa (strain LESB58) protein is 3-hydroxyacyl-[acyl-carrier-protein] dehydratase FabZ.